Here is a 444-residue protein sequence, read N- to C-terminus: Trigger factor (444 aa).

Positions Gly166 to Ala251 constitute a PPIase FKBP-type domain.

Belongs to the FKBP-type PPIase family. Tig subfamily.

The protein localises to the cytoplasm. The enzyme catalyses [protein]-peptidylproline (omega=180) = [protein]-peptidylproline (omega=0). Its function is as follows. Involved in protein export. Acts as a chaperone by maintaining the newly synthesized protein in an open conformation. Functions as a peptidyl-prolyl cis-trans isomerase. The chain is Trigger factor from Cereibacter sphaeroides (strain ATCC 17025 / ATH 2.4.3) (Rhodobacter sphaeroides).